Here is a 204-residue protein sequence, read N- to C-terminus: Probable carboxysome shell protein CsoS1E (204 aa).

Low complexity-rich tracts occupy residues Met-1–Ser-14, Ser-41–Ser-84, and Gly-92–Ser-102. Positions Met-1–Ser-102 are disordered. The 86-residue stretch at Ala-111 to Arg-196 folds into the BMC domain.

It belongs to the bacterial microcompartments protein family. In terms of assembly, homohexamer.

It localises to the carboxysome. Functionally, a probable carboxysomal shell protein found only in Prochlorococcus and Synechococcus strains that grow in low light. The sequence is that of Probable carboxysome shell protein CsoS1E from Prochlorococcus marinus (strain MIT 9313).